Here is a 115-residue protein sequence, read N- to C-terminus: MSDEYDAELDELLRRKALEQQRKALEEQQRKAELEAKKDAILRVILTPEARQRLANVKLVKPELAEAIENQLIALAQSGRIQAPITDEELKEILAQLTNQTRKDYKITIRERGWK.

It belongs to the PDCD5 family.

The protein is DNA-binding protein STK_13740 of Sulfurisphaera tokodaii (strain DSM 16993 / JCM 10545 / NBRC 100140 / 7) (Sulfolobus tokodaii).